Here is a 244-residue protein sequence, read N- to C-terminus: L-xylulose reductase (244 aa).

Position 1 is an N-acetylmethionine (Met-1). 11–39 serves as a coordination point for NADP(+); the sequence is LVTGAGKGIGRSIVKALHAAGARVVAVSR. An Omega-N-methylarginine modification is found at Arg-21. Phosphoserine is present on Ser-46. Ser-136 provides a ligand contact to substrate. Tyr-149 serves as the catalytic Proton acceptor. Residue Lys-153 is part of the active site.

This sequence belongs to the short-chain dehydrogenases/reductases (SDR) family. As to quaternary structure, homotetramer.

It localises to the membrane. The enzyme catalyses xylitol + NADP(+) = L-xylulose + NADPH + H(+). Its function is as follows. Catalyzes the NADPH-dependent reduction of several pentoses, tetroses, trioses, alpha-dicarbonyl compounds and L-xylulose. Participates in the uronate cycle of glucose metabolism. May play a role in the water absorption and cellular osmoregulation in the proximal renal tubules by producing xylitol, an osmolyte, thereby preventing osmolytic stress from occurring in the renal tubules. This Bos taurus (Bovine) protein is L-xylulose reductase (DCXR).